The sequence spans 366 residues: D-alanine--D-alanine ligase (366 aa).

The ATP-grasp domain maps to 144 to 347 (KRLLKDAGLK…YRELIENLIE (204 aa)). 174–229 (KEELGLPMFIKPANQGSSVGVHKVENEEQFYSAIKDAFQFDHKLLVEEAIVGREIE) is an ATP binding site. Residues Asp301, Glu314, and Asn316 each coordinate Mg(2+).

It belongs to the D-alanine--D-alanine ligase family. The cofactor is Mg(2+). Mn(2+) is required as a cofactor.

Its subcellular location is the cytoplasm. It catalyses the reaction 2 D-alanine + ATP = D-alanyl-D-alanine + ADP + phosphate + H(+). It participates in cell wall biogenesis; peptidoglycan biosynthesis. Functionally, cell wall formation. In Oceanobacillus iheyensis (strain DSM 14371 / CIP 107618 / JCM 11309 / KCTC 3954 / HTE831), this protein is D-alanine--D-alanine ligase.